We begin with the raw amino-acid sequence, 117 residues long: DNA-binding protein VNG_2008H (117 aa).

Residues 1-59 (MSGNPDDDRLEELRQRKKEQLKQQQQGGDAEREAQQQQAQQAEQQKQAMLKQNLTDGAR) form a disordered region. Over residues 11 to 21 (EELRQRKKEQL) the composition is skewed to basic and acidic residues. A compositionally biased stretch (low complexity) spans 35–48 (QQQQAQQAEQQKQA).

Belongs to the PDCD5 family.

This chain is DNA-binding protein VNG_2008H, found in Halobacterium salinarum (strain ATCC 700922 / JCM 11081 / NRC-1) (Halobacterium halobium).